Here is a 130-residue protein sequence, read N- to C-terminus: Small ribosomal subunit protein uS8 (130 aa).

This sequence belongs to the universal ribosomal protein uS8 family. Part of the 30S ribosomal subunit. Contacts proteins S5 and S12.

In terms of biological role, one of the primary rRNA binding proteins, it binds directly to 16S rRNA central domain where it helps coordinate assembly of the platform of the 30S subunit. This chain is Small ribosomal subunit protein uS8, found in Proteus mirabilis (strain HI4320).